The chain runs to 385 residues: Trehalose-phosphate phosphatase A (385 aa).

The disordered stretch occupies residues 1-21 (MDMKSGHSSPVMTDSPPISNS).

It belongs to the trehalose phosphatase family. A divalent metal cation serves as cofactor. As to expression, expressed in flowers.

It catalyses the reaction alpha,alpha-trehalose 6-phosphate + H2O = alpha,alpha-trehalose + phosphate. It participates in glycan biosynthesis; trehalose biosynthesis. Its function is as follows. Removes the phosphate from trehalose 6-phosphate to produce free trehalose. Trehalose accumulation in plant may improve abiotic stress tolerance. In Arabidopsis thaliana (Mouse-ear cress), this protein is Trehalose-phosphate phosphatase A (TPPA).